Here is a 274-residue protein sequence, read N- to C-terminus: Penicillin-insensitive murein endopeptidase (274 aa).

The N-terminal stretch at 1–19 (MNKTAIALLALLASSASLA) is a signal peptide. Cystine bridges form between Cys-44-Cys-265, Cys-187-Cys-235, and Cys-216-Cys-223. Positions 110, 113, 120, 147, 150, and 211 each coordinate Zn(2+). Positions 228–264 (LPPPGDGCGAELQSWFAPPKPGTTKPEKKTPSPLPPS) are disordered.

This sequence belongs to the peptidase M74 family. As to quaternary structure, dimer. Zn(2+) serves as cofactor.

It localises to the periplasm. Murein endopeptidase that cleaves the D-alanyl-meso-2,6-diamino-pimelyl amide bond that connects peptidoglycan strands. Likely plays a role in the removal of murein from the sacculus. The chain is Penicillin-insensitive murein endopeptidase from Escherichia coli (strain 55989 / EAEC).